The following is a 502-amino-acid chain: Lysine--tRNA ligase (502 aa).

Mg(2+) contacts are provided by glutamate 398 and glutamate 405.

Belongs to the class-II aminoacyl-tRNA synthetase family. Homodimer. Mg(2+) is required as a cofactor.

It localises to the cytoplasm. The catalysed reaction is tRNA(Lys) + L-lysine + ATP = L-lysyl-tRNA(Lys) + AMP + diphosphate. In Thermosipho melanesiensis (strain DSM 12029 / CIP 104789 / BI429), this protein is Lysine--tRNA ligase.